The following is a 70-amino-acid chain: DNA-directed RNA polymerase subunit omega (70 aa).

This sequence belongs to the RNA polymerase subunit omega family. In terms of assembly, the RNAP catalytic core consists of 2 alpha, 1 beta, 1 beta' and 1 omega subunit. When a sigma factor is associated with the core the holoenzyme is formed, which can initiate transcription.

It carries out the reaction RNA(n) + a ribonucleoside 5'-triphosphate = RNA(n+1) + diphosphate. Its function is as follows. Promotes RNA polymerase assembly. Latches the N- and C-terminal regions of the beta' subunit thereby facilitating its interaction with the beta and alpha subunits. The protein is DNA-directed RNA polymerase subunit omega of Staphylococcus epidermidis (strain ATCC 12228 / FDA PCI 1200).